A 335-amino-acid chain; its full sequence is Expansin-like protein 3 (335 aa).

Residues 1–20 (MKFNTIFLVLSIVKFILISA) form the signal peptide. Residues 21–314 (QSCPFSQSII…LNENENIESN (294 aa)) are Extracellular-facing. Residues 43 to 143 (AGNCGFEKLN…VKVPCEVSGN (101 aa)) enclose the Expansin-like EG45 domain. Disulfide bonds link Cys46–Cys76 and Cys79–Cys138. The N-linked (GlcNAc...) asparagine glycan is linked to Asn87. Residues 247-276 (YKPQTFNSQQTSNNQNSNTQTPTKQPSPNS) form a disordered region. Positions 249–272 (PQTFNSQQTSNNQNSNTQTPTKQP) are enriched in low complexity. The chain crosses the membrane as a helical span at residues 315-335 (SLKLLPNFLLLILIILLNINF).

Belongs to the expansin family. Expansin A subfamily.

It localises to the membrane. May serve to lubricate the movement of the cellulose microfibrils during cell growth and wall extension and/or may serve to maintain the fluid state of the slug cell wall. The protein is Expansin-like protein 3 (expl3) of Dictyostelium discoideum (Social amoeba).